The sequence spans 250 residues: tRNA (guanine-N(1)-)-methyltransferase (250 aa).

S-adenosyl-L-methionine-binding positions include Gly-116 and 136-141; that span reads IGDYVL.

This sequence belongs to the RNA methyltransferase TrmD family. In terms of assembly, homodimer.

Its subcellular location is the cytoplasm. It carries out the reaction guanosine(37) in tRNA + S-adenosyl-L-methionine = N(1)-methylguanosine(37) in tRNA + S-adenosyl-L-homocysteine + H(+). Its function is as follows. Specifically methylates guanosine-37 in various tRNAs. This chain is tRNA (guanine-N(1)-)-methyltransferase, found in Pseudomonas fluorescens (strain ATCC BAA-477 / NRRL B-23932 / Pf-5).